Consider the following 112-residue polypeptide: Iron-sulfur cluster assembly protein CyaY (112 aa).

This sequence belongs to the frataxin family.

Functionally, involved in iron-sulfur (Fe-S) cluster assembly. May act as a regulator of Fe-S biogenesis. The polypeptide is Iron-sulfur cluster assembly protein CyaY (Delftia acidovorans (strain DSM 14801 / SPH-1)).